The sequence spans 305 residues: Protein-methionine-sulfoxide reductase catalytic subunit MsrP (305 aa).

A signal peptide (tat-type signal) is located at residues 1-54 (MLIRKPADHLPSEITSESVYFNRRQFMAGAAGLLLSAETLAGLAAKKSPLSQLA). Residues N69, 72-73 (YE), C126, T161, N209, R214, and 225-227 (SIK) each bind Mo-molybdopterin.

This sequence belongs to the MsrP family. Heterodimer of a catalytic subunit (MsrP) and a heme-binding subunit (MsrQ). It depends on Mo-molybdopterin as a cofactor. Predicted to be exported by the Tat system. The position of the signal peptide cleavage has not been experimentally proven.

The protein localises to the periplasm. The catalysed reaction is L-methionyl-[protein] + a quinone + H2O = L-methionyl-(S)-S-oxide-[protein] + a quinol. The enzyme catalyses L-methionyl-[protein] + a quinone + H2O = L-methionyl-(R)-S-oxide-[protein] + a quinol. Part of the MsrPQ system that repairs oxidized periplasmic proteins containing methionine sulfoxide residues (Met-O), using respiratory chain electrons. Thus protects these proteins from oxidative-stress damage caused by reactive species of oxygen and chlorine generated by the host defense mechanisms. MsrPQ is essential for the maintenance of envelope integrity under bleach stress, rescuing a wide series of structurally unrelated periplasmic proteins from methionine oxidation. The catalytic subunit MsrP is non-stereospecific, being able to reduce both (R-) and (S-) diastereoisomers of methionine sulfoxide. The protein is Protein-methionine-sulfoxide reductase catalytic subunit MsrP of Chromobacterium violaceum (strain ATCC 12472 / DSM 30191 / JCM 1249 / CCUG 213 / NBRC 12614 / NCIMB 9131 / NCTC 9757 / MK).